The following is a 429-amino-acid chain: Adenylosuccinate synthetase (429 aa).

GTP is bound by residues 12–18 and 40–42; these read GDEGKGK and GHT. The active-site Proton acceptor is the D13. Residues D13 and G40 each coordinate Mg(2+). IMP is bound by residues 13–16, 38–41, T129, R143, Q223, T238, and R302; these read DEGK and NAGH. H41 functions as the Proton donor in the catalytic mechanism. 298 to 304 contributes to the substrate binding site; it reads TVTGRPR. GTP contacts are provided by residues R304, 330–332, and 412–414; these read KLD and STS.

It belongs to the adenylosuccinate synthetase family. Homodimer. Mg(2+) is required as a cofactor.

It localises to the cytoplasm. The enzyme catalyses IMP + L-aspartate + GTP = N(6)-(1,2-dicarboxyethyl)-AMP + GDP + phosphate + 2 H(+). Its pathway is purine metabolism; AMP biosynthesis via de novo pathway; AMP from IMP: step 1/2. Functionally, plays an important role in the de novo pathway of purine nucleotide biosynthesis. Catalyzes the first committed step in the biosynthesis of AMP from IMP. This Gluconobacter oxydans (strain 621H) (Gluconobacter suboxydans) protein is Adenylosuccinate synthetase.